The chain runs to 196 residues: MKKSKASDVAILAIFIAIMVVVQLFTQFVINVWPFPVKPTLLHLPVIIGSIILGWRKGAFLGLVWGLISFVTATIVTTPTSFLFSPFQPVIGTHHGSPWGLFIAFIPRILVGILPYFVYKIANNRLGAGLAAFAGTATNTVLVLTSIFLFFGSTLKWSLSYLLGAIVATNSLTEVIIAVILTTAIVPALTKARNNS.

The next 6 helical transmembrane spans lie at alanine 10–isoleucine 30, phenylalanine 35–tryptophan 55, glycine 58–threonine 78, tryptophan 99–tyrosine 119, alanine 131–phenylalanine 151, and tyrosine 161–leucine 181.

As to quaternary structure, in E.coli forms a stable energy-coupling factor (ECF) transporter complex composed of 2 membrane-embedded substrate-binding protein (S component), 2 ATP-binding proteins (A and A' components) and 2 transmembrane proteins (T component), probably with a stoichiometry of 2:1:1:2. May be able to interact with more than 1 S component at a time.

The protein resides in the cell membrane. In terms of biological role, probably a pantothenic acid-binding protein that interacts with the energy-coupling factor (ECF) ABC-transporter complex. Unlike classic ABC transporters this ECF transporter provides the energy necessary to transport a number of different substrates. The substrates themselves are bound by transmembrane, not extracytoplasmic soluble proteins. This Lactococcus lactis subsp. cremoris (strain MG1363) protein is Pantothenic acid transporter PanT (panT).